We begin with the raw amino-acid sequence, 334 residues long: Cytochrome c biogenesis protein CcsA (334 aa).

The next 8 helical transmembrane spans lie at 12 to 32 (NTAF…VVFP), 35 to 55 (WLVQ…TALL), 67 to 87 (ISNL…VHFI), 96 to 116 (FVGA…ALTL), 141 to 161 (VMMV…AFLF), 242 to 262 (IIGL…VWAN), 277 to 297 (WALI…TKGW), and 303 to 323 (AILA…VNLL).

It belongs to the CcmF/CycK/Ccl1/NrfE/CcsA family. As to quaternary structure, may interact with ccs1.

The protein resides in the cellular thylakoid membrane. Required during biogenesis of c-type cytochromes (cytochrome c6 and cytochrome f) at the step of heme attachment. This chain is Cytochrome c biogenesis protein CcsA, found in Synechocystis sp. (strain ATCC 27184 / PCC 6803 / Kazusa).